The following is a 468-amino-acid chain: Hydroxymethylglutaryl-CoA synthase B (468 aa).

The active-site Proton donor/acceptor is the E85. C119 acts as the Acyl-thioester intermediate in catalysis. (3S)-3-hydroxy-3-methylglutaryl-CoA is bound by residues C119, T161, S211, H250, K259, N327, and S359. H250 serves as the catalytic Proton donor/acceptor.

This sequence belongs to the thiolase-like superfamily. HMG-CoA synthase family.

The catalysed reaction is acetoacetyl-CoA + acetyl-CoA + H2O = (3S)-3-hydroxy-3-methylglutaryl-CoA + CoA + H(+). The protein operates within metabolic intermediate biosynthesis; (R)-mevalonate biosynthesis; (R)-mevalonate from acetyl-CoA: step 2/3. Condenses acetyl-CoA with acetoacetyl-CoA to form HMG-CoA, which is the substrate for HMG-CoA reductase. This Dictyostelium discoideum (Social amoeba) protein is Hydroxymethylglutaryl-CoA synthase B (hgsB).